Consider the following 145-residue polypeptide: Transcriptional regulator MraZ (145 aa).

SpoVT-AbrB domains are found at residues 7-54 (NATN…GPDL) and 83-126 (GVFM…QPQA).

It belongs to the MraZ family. As to quaternary structure, forms oligomers.

The protein resides in the cytoplasm. It localises to the nucleoid. This chain is Transcriptional regulator MraZ, found in Rhizobium johnstonii (strain DSM 114642 / LMG 32736 / 3841) (Rhizobium leguminosarum bv. viciae).